A 61-amino-acid chain; its full sequence is Photosystem II reaction center protein K (61 aa).

A propeptide spanning residues 1-24 (MLNIFNLICICFNSALFSSTFLVA) is cleaved from the precursor. A helical membrane pass occupies residues 40–60 (MPVIPLFFLLLAFVWQAAVSF).

This sequence belongs to the PsbK family. PSII is composed of 1 copy each of membrane proteins PsbA, PsbB, PsbC, PsbD, PsbE, PsbF, PsbH, PsbI, PsbJ, PsbK, PsbL, PsbM, PsbT, PsbX, PsbY, PsbZ, Psb30/Ycf12, at least 3 peripheral proteins of the oxygen-evolving complex and a large number of cofactors. It forms dimeric complexes.

It localises to the plastid. Its subcellular location is the chloroplast thylakoid membrane. In terms of biological role, one of the components of the core complex of photosystem II (PSII). PSII is a light-driven water:plastoquinone oxidoreductase that uses light energy to abstract electrons from H(2)O, generating O(2) and a proton gradient subsequently used for ATP formation. It consists of a core antenna complex that captures photons, and an electron transfer chain that converts photonic excitation into a charge separation. The polypeptide is Photosystem II reaction center protein K (Sinapis alba (White mustard)).